The sequence spans 566 residues: Glutamate--tRNA ligase (566 aa).

Positions 93-103 (PNPDYTIHLGN) match the 'HIGH' region motif.

It belongs to the class-I aminoacyl-tRNA synthetase family. Glutamate--tRNA ligase type 2 subfamily.

It is found in the cytoplasm. The catalysed reaction is tRNA(Glu) + L-glutamate + ATP = L-glutamyl-tRNA(Glu) + AMP + diphosphate. Catalyzes the attachment of glutamate to tRNA(Glu) in a two-step reaction: glutamate is first activated by ATP to form Glu-AMP and then transferred to the acceptor end of tRNA(Glu). The protein is Glutamate--tRNA ligase of Staphylothermus marinus (strain ATCC 43588 / DSM 3639 / JCM 9404 / F1).